The sequence spans 140 residues: Transcription antitermination protein NusB (140 aa).

Belongs to the NusB family.

Its function is as follows. Involved in transcription antitermination. Required for transcription of ribosomal RNA (rRNA) genes. Binds specifically to the boxA antiterminator sequence of the ribosomal RNA (rrn) operons. The chain is Transcription antitermination protein NusB from Streptococcus pneumoniae (strain 70585).